An 854-amino-acid chain; its full sequence is Nucleolar MIF4G domain-containing protein 1 homolog (854 aa).

Disordered stretches follow at residues 1–38 (MAKIKKKEAKAKPLTRKEQRKQKSEFKKQNKRLYFAGK), 55–105 (QSQL…DAEV), 120–161 (PLGK…KQRI), and 217–306 (RKWE…RDAE). Basic and acidic residues predominate over residues 15–28 (TRKEQRKQKSEFKK). Positions 60 to 71 (KNKKKKRSKKPK) are enriched in basic residues. Residues 88 to 105 (IDSDDDESIDSDFSDAEV) show a composition bias toward acidic residues. Composition is skewed to basic and acidic residues over residues 135–156 (RQDEEAVRRKELRQQKELESKS) and 217–238 (RKWEEKQERKKKLKEQQEKEEA). Residues 242 to 289 (SDEEEDKEDRDEPMDNFSEDDSGSEGEDDDEDLTGEEEQSEEDSEQEE) are compositionally biased toward acidic residues. The span at 290-306 (NAPKIKEDIYGRKRDAE) shows a compositional bias: basic and acidic residues. One can recognise an MIF4G domain in the interval 352 to 553 (LKQCKGLLNR…DILNAVKNNN (202 aa)). The 115-residue stretch at 650 to 764 (AERRNIFCII…QLSVLKVVDF (115 aa)) folds into the MI domain.

It belongs to the CWC22 family.

It localises to the nucleus. The protein resides in the nucleolus. The protein is Nucleolar MIF4G domain-containing protein 1 homolog of Drosophila melanogaster (Fruit fly).